The following is a 395-amino-acid chain: Phosphoglycerate kinase (395 aa).

Residues 21-23 (DLN), Arg-36, 59-62 (HLGR), Arg-113, and Arg-146 each bind substrate. Residues Lys-197, Glu-324, and 350–353 (GGDT) contribute to the ATP site.

Belongs to the phosphoglycerate kinase family. In terms of assembly, monomer.

Its subcellular location is the cytoplasm. It carries out the reaction (2R)-3-phosphoglycerate + ATP = (2R)-3-phospho-glyceroyl phosphate + ADP. It functions in the pathway carbohydrate degradation; glycolysis; pyruvate from D-glyceraldehyde 3-phosphate: step 2/5. This is Phosphoglycerate kinase from Acinetobacter baumannii (strain ATCC 17978 / DSM 105126 / CIP 53.77 / LMG 1025 / NCDC KC755 / 5377).